An 808-amino-acid polypeptide reads, in one-letter code: MAKRHKHFESRGGFRKKRGGGRGSQRGRGSKRGRGGRFRGFEETERSASEPGAWLNSSVPLGDGDLSNPDMMVDNYRPRKHISQDTITDHYFGRKSSLKLNSMRMAGLRHNDWRDPNNGNSASFRKRPIEFIKANCTYDPSRDLILQLANRSKNQESKEPEEDANKCSEYAEHSEKDMEIDTAATENDANISYDESDTDQEIGNFNHSIENSKHNNNISECDITAVTDQELFFVDEEGMDISQKPTKVVHITEHEKKMGSNVEFHNVLTVGKVEISLNQDENDEVYVDRKPTAKYHPFHNYISNVIERMQEEENIDSDDFEDEDDIYLDNSGNDMPETELDQDEIIDLQRHDDKDHAVQTCAIPTNTLSNDLDTLHITESNDDRITINNHNMDSTVETDKEKDPEFGFLEEDYAVNTSEVIVDNIRLGLNDNSYFLKCYRFFGDYSFHWIDQEAFVSFLTEDLELPMNRVGAYLAYVKNSLVPDETPPSPTYSDIPFSDTSNESDEDNALPNVDAVSSCSNDDEDEELGDDVDDLVSYSLKYANSRNIDYETRALEFTGKGKKKKLLVNEQLDLDNETMETLQAKLSKRMENKAKKRRLKEDFIDKENMNSDDLFLKYPYGFHVQNIRDEFELFLTRNKDRMSFPPLDPHGNKVITKFATCYNIKSSKVGKGNHTHIMVEKVKKTKWSRPNYNMVLQLTRQRPVFMRIDVRRPKEDAIKENSGRRGPTAKFHVKEGEVVGENAPEIGQDNIGRRMLEKLGWSSGEGLGAHGNKGISIPVMARVKKSKSGLRHSKEDEDTGRSSSFRKK.

Composition is skewed to basic residues over residues 1 to 20 (MAKRHKHFESRGGFRKKRGG) and 28 to 37 (RGSKRGRGGR). Disordered regions lie at residues 1–67 (MAKR…GDLS), 151–180 (RSKNQESKEPEEDANKCSEYAEHSEKDMEI), and 485–529 (ETPP…EELG). Basic and acidic residues-rich tracts occupy residues 39–48 (RGFEETERSA) and 153–179 (KNQESKEPEEDANKCSEYAEHSEKDME). An R3H domain is found at 621–683 (GFHVQNIRDE…HTHIMVEKVK (63 aa)). In terms of domain architecture, G-patch spans 748–795 (QDNIGRRMLEKLGWSSGEGLGAHGNKGISIPVMARVKKSKSGLRHSKE). The tract at residues 764-808 (GEGLGAHGNKGISIPVMARVKKSKSGLRHSKEDEDTGRSSSFRKK) is disordered. Residues 782-791 (RVKKSKSGLR) are compositionally biased toward basic residues.

The protein belongs to the SQS1 family.

The protein localises to the cytoplasm. It is found in the nucleus. Functionally, may be involved in splicing. The protein is Protein SQS1 (SQS1) of Candida glabrata (strain ATCC 2001 / BCRC 20586 / JCM 3761 / NBRC 0622 / NRRL Y-65 / CBS 138) (Yeast).